We begin with the raw amino-acid sequence, 71 residues long: Large ribosomal subunit protein bL31 (71 aa).

Zn(2+) contacts are provided by cysteine 16, cysteine 18, cysteine 37, and cysteine 40.

The protein belongs to the bacterial ribosomal protein bL31 family. Type A subfamily. Part of the 50S ribosomal subunit. Requires Zn(2+) as cofactor.

Binds the 23S rRNA. This Actinobacillus succinogenes (strain ATCC 55618 / DSM 22257 / CCUG 43843 / 130Z) protein is Large ribosomal subunit protein bL31.